A 598-amino-acid polypeptide reads, in one-letter code: Arginine--tRNA ligase (598 aa).

The 'HIGH' region motif lies at Ala-139 to His-149.

It belongs to the class-I aminoacyl-tRNA synthetase family. As to quaternary structure, monomer.

Its subcellular location is the cytoplasm. The catalysed reaction is tRNA(Arg) + L-arginine + ATP = L-arginyl-tRNA(Arg) + AMP + diphosphate. The chain is Arginine--tRNA ligase from Bradyrhizobium sp. (strain ORS 278).